Here is a 185-residue protein sequence, read N- to C-terminus: Signal peptidase complex subunit 3 (185 aa).

At 1 to 12 the chain is on the cytoplasmic side; it reads MIVDTFTNRGST. Residues 13–34 traverse the membrane as a helical; Signal-anchor for type II membrane protein segment; it reads FFSKLSTVLFFLCAVITFQGVI. Topologically, residues 35 to 185 are lumenal; that stretch reads QRREVELDTP…PFHKIITQPK (151 aa). N-linked (GlcNAc...) asparagine glycosylation occurs at Asn-148.

The protein belongs to the SPCS3 family. Component of the signal peptidase complex (SPC) composed of a catalytic subunit sec11 and three accessory subunits spc1, spc2 and spc3. The complex induces a local thinning of the ER membrane which is used to measure the length of the signal peptide (SP) h-region of protein substrates. This ensures the selectivity of the complex towards h-regions shorter than 18-20 amino acids. SPC associates with the translocon complex.

Its subcellular location is the endoplasmic reticulum membrane. Essential component of the signal peptidase complex (SPC) which catalyzes the cleavage of N-terminal signal sequences from nascent proteins as they are translocated into the lumen of the endoplasmic reticulum. Essential for the SPC catalytic activity, possibly by stabilizing and positioning the active center of the complex close to the lumenal surface. Essential for viability. The chain is Signal peptidase complex subunit 3 (spc3) from Schizosaccharomyces pombe (strain 972 / ATCC 24843) (Fission yeast).